A 442-amino-acid polypeptide reads, in one-letter code: GPI mannosyltransferase 1 (442 aa).

8 consecutive transmembrane segments (helical) span residues 22-42 (INLT…LIVF), 95-115 (ILIH…IIAY), 177-197 (LASI…IYSI), 242-262 (AFTF…IFLF), 307-327 (MIVA…ITLV), 336-356 (LLLE…QYFI), 361-381 (ILPL…ILFA), and 408-428 (IWVA…KLIL).

The protein belongs to the PIGM family.

The protein resides in the endoplasmic reticulum membrane. It functions in the pathway glycolipid biosynthesis; glycosylphosphatidylinositol-anchor biosynthesis. Functionally, mannosyltransferase involved in glycosylphosphatidylinositol-anchor biosynthesis. Transfers the first alpha-1,4-mannose to GlcN-acyl-PI during GPI precursor assembly. The polypeptide is GPI mannosyltransferase 1 (pigm) (Dictyostelium discoideum (Social amoeba)).